A 137-amino-acid polypeptide reads, in one-letter code: Protein LTO1 homolog (137 aa).

An N-acetylalanine modification is found at Ala-2. Ser-4 bears the Phosphoserine mark. The interval 22–58 is deca-GX3 motif; required for interaction with YAE1 and the CIA complex; the sequence is GYREGYEEGSSLGVMEGRQHGTLHGAKIGSEIGCYQG.

It belongs to the LTO1 family. Forms a complex with YAE1. Interacts with PYCR1 and PYCR2. As to expression, widely expressed. Highly expressed in placenta, kidney and skeletal muscle.

The protein resides in the nucleus. In terms of biological role, the complex LTO1:YAE1 functions as a target specific adapter that probably recruits apo-ABCE1 to the cytosolic iron-sulfur protein assembly (CIA) complex machinery. May be required for biogenesis of the large ribosomal subunit and initiation of translation. May play a role in the regulation of proline metabolism and ROS production. The polypeptide is Protein LTO1 homolog (Homo sapiens (Human)).